The following is a 196-amino-acid chain: Putative HTH-type transcriptional regulator protein PtxE (196 aa).

The region spanning Met1–Thr59 is the HTH lysR-type domain. A DNA-binding region (H-T-H motif) is located at residues Phe19 to Gln38.

The protein belongs to the LysR transcriptional regulatory family.

This Stutzerimonas stutzeri (Pseudomonas stutzeri) protein is Putative HTH-type transcriptional regulator protein PtxE (ptxE).